Consider the following 612-residue polypeptide: MPEYRSKTSTHGRNMAGARALWRATGMRDGDFHKPIIAIANSFTQFVPGHVHLKDLGQLVAREIERVGGVAKEFDTIAVDDGIAMGHDGMLYSLPSREIIADSVEYMVNAHCADALVCISNCDKITPGMLMAALRLNIPTVFVSGGPMEAGKTKLAEHKLDLIDAMVIAADDSASDEKVAEFERSACPTCGSCSGMFTANSMNCLTEALGLSLPGNGTVVATHADREQLFLRAGRVAVELCHRWYGGEDPTALPRGIATFEAFENAMTLDIAMGGSTNTILHLLAAAQEGEVAFGMQDIDRLSKRVPQLCKVAPNTPKYHIEDVHRAGGIMAILGELARGGLLHTNAATVHARTLADAIAQWDVTQTDDENVHTFYKAGPAGIPTQIAFSQATRWDSLDTDRSDGCIRDVAHAFSQEGGLAVLYGNIARDGCVVKTAGVDESIHVFEGTARVFESQDAAVKGILADEVVAGDVVVIRYEGPKGGPGMQEMLYPTSYLKSKGLGKQCALLTDGRFSGGTSGLSIGHASPEAAAGGAIGLVREGDRILIDIPNRSINLLISDEELALRRAEQDAKGWKPVEVRPRKVTTALKAYALLATSADKGAVRDKALLDG.

Aspartate 81 provides a ligand contact to Mg(2+). Cysteine 122 provides a ligand contact to [2Fe-2S] cluster. Mg(2+) is bound by residues aspartate 123 and lysine 124. N6-carboxylysine is present on lysine 124. [2Fe-2S] cluster is bound at residue cysteine 193. Mg(2+) is bound at residue glutamate 489. The Proton acceptor role is filled by serine 515.

Belongs to the IlvD/Edd family. As to quaternary structure, homodimer. [2Fe-2S] cluster is required as a cofactor. Mg(2+) serves as cofactor.

The enzyme catalyses (2R)-2,3-dihydroxy-3-methylbutanoate = 3-methyl-2-oxobutanoate + H2O. It catalyses the reaction (2R,3R)-2,3-dihydroxy-3-methylpentanoate = (S)-3-methyl-2-oxopentanoate + H2O. It participates in amino-acid biosynthesis; L-isoleucine biosynthesis; L-isoleucine from 2-oxobutanoate: step 3/4. The protein operates within amino-acid biosynthesis; L-valine biosynthesis; L-valine from pyruvate: step 3/4. In terms of biological role, functions in the biosynthesis of branched-chain amino acids. Catalyzes the dehydration of (2R,3R)-2,3-dihydroxy-3-methylpentanoate (2,3-dihydroxy-3-methylvalerate) into 2-oxo-3-methylpentanoate (2-oxo-3-methylvalerate) and of (2R)-2,3-dihydroxy-3-methylbutanoate (2,3-dihydroxyisovalerate) into 2-oxo-3-methylbutanoate (2-oxoisovalerate), the penultimate precursor to L-isoleucine and L-valine, respectively. In Xanthomonas axonopodis pv. citri (strain 306), this protein is Dihydroxy-acid dehydratase.